The chain runs to 523 residues: Probable methylmalonate-semialdehyde/malonate-semialdehyde dehydrogenase [acylating], mitochondrial (523 aa).

Residues 1–22 constitute a mitochondrion transit peptide; sequence MLSRLARVQPKCQQLAHFSTSK. Residues Phe-175, Lys-199, and Glu-202 each coordinate NAD(+). Cys-307 acts as the Nucleophile in catalysis. Glu-407 is a binding site for NAD(+).

The protein belongs to the aldehyde dehydrogenase family. As to quaternary structure, homodimer.

The protein resides in the mitochondrion. It catalyses the reaction 2-methyl-3-oxopropanoate + NAD(+) + CoA + H2O = propanoyl-CoA + hydrogencarbonate + NADH + H(+). The enzyme catalyses 3-oxopropanoate + NAD(+) + CoA + H2O = hydrogencarbonate + acetyl-CoA + NADH + H(+). In terms of biological role, probable malonate and methylmalonate semialdehyde dehydrogenase involved in the catabolism of valine, thymine, and compounds catabolized by way of beta-alanine, including uracil and cytidine. This chain is Probable methylmalonate-semialdehyde/malonate-semialdehyde dehydrogenase [acylating], mitochondrial (alh-8), found in Caenorhabditis elegans.